Consider the following 358-residue polypeptide: Vesicular integral-membrane protein VIP36 (358 aa).

The N-terminal stretch at 1–46 is a signal peptide; that stretch reads MAAEAWLWRWGWGWGQRCPGRPGLPGPGPSPTTFLHLLLLLGPVAA. The Lumenal portion of the chain corresponds to 47 to 324; sequence DITDGNSEHL…FRNGPLTGWR (278 aa). The L-type lectin-like domain maps to 54–278; it reads EHLKREHSLI…DIISIKLFQL (225 aa). 2 residues coordinate a carbohydrate: Ser-98 and Asp-133. Residues Asp-164, Tyr-166, and Asn-168 each contribute to the Ca(2+) site. 166 to 168 contacts a carbohydrate; that stretch reads YPN. N-linked (GlcNAc...) asparagine glycosylation is present at Asn-185. His-192 lines the a carbohydrate pocket. Ca(2+) is bound at residue Asp-195. A disulfide bond links Cys-204 and Cys-241. 262 to 264 contributes to the a carbohydrate binding site; the sequence is GDL. The chain crosses the membrane as a helical span at residues 325–347; the sequence is VFLLLLCALLGVVVCAVVGAVVF. The Cytoplasmic segment spans residues 348–358; that stretch reads QKRQERNKRFY.

Ca(2+) serves as cofactor.

The protein resides in the golgi apparatus membrane. Functionally, plays a role as an intracellular lectin in the early secretory pathway. Interacts with N-acetyl-D-galactosamine and high-mannose type glycans and may also bind to O-linked glycans. Involved in the transport and sorting of glycoproteins carrying high mannose-type glycans. The polypeptide is Vesicular integral-membrane protein VIP36 (Lman2) (Mus musculus (Mouse)).